Here is a 250-residue protein sequence, read N- to C-terminus: Ribonuclease HII (250 aa).

One can recognise an RNase H type-2 domain in the interval Q66–K250. D72, E73, and D164 together coordinate a divalent metal cation.

The protein belongs to the RNase HII family. The cofactor is Mn(2+). It depends on Mg(2+) as a cofactor.

It is found in the cytoplasm. It carries out the reaction Endonucleolytic cleavage to 5'-phosphomonoester.. In terms of biological role, endonuclease that specifically degrades the RNA of RNA-DNA hybrids. The chain is Ribonuclease HII from Lactobacillus acidophilus (strain ATCC 700396 / NCK56 / N2 / NCFM).